Reading from the N-terminus, the 173-residue chain is Alpha-crystallin A chain (173 aa).

M1 is subject to N-acetylmethionine. Residues 1-63 are required for complex formation with BFSP1 and BFSP2; sequence MDIAIQHPWF…RSVLDSGISE (63 aa). A Deamidated glutamine; partial modification is found at Q6. S45 is subject to Phosphoserine. Q50 bears the Deamidated glutamine; partial mark. The sHSP domain occupies 52–162; the sequence is LFRSVLDSGI…GHSERAIPVS (111 aa). N6-acetyllysine is present on K70. Q90 carries the post-translational modification Deamidated glutamine; partial. Residue K99 is modified to N6-acetyllysine. Position 100 (H100) interacts with Zn(2+). Deamidated asparagine; partial is present on N101. Zn(2+)-binding residues include E102 and H107. Residue S122 is modified to Phosphoserine. Residue N123 is modified to Deamidated asparagine; partial. Positions 144–173 are disordered; that stretch reads PKVTSGMDAGHSERAIPVSREEKPSSAPSS. Over residues 153–167 the composition is skewed to basic and acidic residues; it reads GHSERAIPVSREEKP. Position 154 (H154) interacts with Zn(2+). A glycan (O-linked (GlcNAc) serine) is linked at S162.

The protein belongs to the small heat shock protein (HSP20) family. As to quaternary structure, heteromer composed of three CRYAA and one CRYAB subunits. Inter-subunit bridging via zinc ions enhances stability, which is crucial as there is no protein turn over in the lens. Can also form homodimers and homotetramers (dimers of dimers) which serve as the building blocks of homooligomers. Within homooligomers, the zinc-binding motif is created from residues of 3 different molecules. His-100 and Glu-102 from one molecule are ligands of the zinc ion, and His-107 and His-154 residues from additional molecules complete the site with tetrahedral coordination geometry. Part of a complex required for lens intermediate filament formation composed of BFSP1, BFSP2 and CRYAA. Post-translationally, acetylation at Lys-70 may increase chaperone activity. In terms of processing, undergoes age-dependent proteolytical cleavage at the C-terminus.

It is found in the cytoplasm. The protein localises to the nucleus. Contributes to the transparency and refractive index of the lens. Acts as a chaperone, preventing aggregation of various proteins under a wide range of stress conditions. Required for the correct formation of lens intermediate filaments as part of a complex composed of BFSP1, BFSP2 and CRYAA. This is Alpha-crystallin A chain (CRYAA) from Phocoena phocoena (Harbor porpoise).